The following is a 184-amino-acid chain: Large ribosomal subunit protein uL5c (184 aa).

This sequence belongs to the universal ribosomal protein uL5 family. Part of the 50S ribosomal subunit; contacts the 5S rRNA.

Its subcellular location is the plastid. The protein resides in the chloroplast. Functionally, binds 5S rRNA, forms part of the central protuberance of the 50S subunit. The chain is Large ribosomal subunit protein uL5c (rpl5) from Nephroselmis olivacea (Green alga).